Here is a 751-residue protein sequence, read N- to C-terminus: Photosystem I P700 chlorophyll a apoprotein A1 (751 aa).

A run of 8 helical transmembrane segments spans residues 72–95 (IFSAHFGHLAVVFVWLSGMYFHGA), 158–181 (LYCTAIGGLVMAALMLFAGWFHYH), 197–221 (MNHHLAGLLGLGSLGWAGHQIHVSM), 293–311 (TAHHHLAIAVLFIIAGHMY), 348–371 (WHAQLAINLALLGSLTIIVAQHMY), 387–413 (LSLFTHHMWIGGFLIVGAGAHGAIFMV), 435–457 (AIISHLNWVCIFLGFHSFGLYIH), and 532–550 (FMVHHIHAFTIHVTALILL). Positions 574 and 583 each coordinate [4Fe-4S] cluster. A run of 2 helical transmembrane segments spans residues 590–611 (HVFLGLFWMYNSLSIVIFHFSW) and 665–687 (LSAYGIMFLAGHFVFAFSLMFLF). Position 676 (His-676) interacts with chlorophyll a'. Met-684 and Tyr-692 together coordinate chlorophyll a. Position 693 (Trp-693) interacts with phylloquinone. A helical transmembrane segment spans residues 725-745 (AVGVAHYLLGGIVTTWAFFLA).

Belongs to the PsaA/PsaB family. The PsaA/B heterodimer binds the P700 chlorophyll special pair and subsequent electron acceptors. PSI consists of a core antenna complex that captures photons, and an electron transfer chain that converts photonic excitation into a charge separation. The cyanobacterial PSI reaction center is composed of one copy each of PsaA,B,C,D,E,F,I,J,K,L,M and X, and forms trimeric complexes. The cofactor is PSI electron transfer chain: 5 chlorophyll a, 1 chlorophyll a', 2 phylloquinones and 3 4Fe-4S clusters. PSI core antenna: 90 chlorophyll a, 22 carotenoids, 3 phospholipids and 1 galactolipid. P700 is a chlorophyll a/chlorophyll a' dimer, A0 is one or more chlorophyll a, A1 is one or both phylloquinones and FX is a shared 4Fe-4S iron-sulfur center..

The protein resides in the cellular thylakoid membrane. The enzyme catalyses reduced [plastocyanin] + hnu + oxidized [2Fe-2S]-[ferredoxin] = oxidized [plastocyanin] + reduced [2Fe-2S]-[ferredoxin]. In terms of biological role, psaA and PsaB bind P700, the primary electron donor of photosystem I (PSI), as well as the electron acceptors A0, A1 and FX. PSI is a plastocyanin/cytochrome c6-ferredoxin oxidoreductase, converting photonic excitation into a charge separation, which transfers an electron from the donor P700 chlorophyll pair to the spectroscopically characterized acceptors A0, A1, FX, FA and FB in turn. Oxidized P700 is reduced on the lumenal side of the thylakoid membrane by plastocyanin or cytochrome c6. The chain is Photosystem I P700 chlorophyll a apoprotein A1 from Synechocystis sp. (strain ATCC 27184 / PCC 6803 / Kazusa).